The following is a 322-amino-acid chain: Acetyl-coenzyme A carboxylase carboxyl transferase subunit beta (322 aa).

The CoA carboxyltransferase N-terminal domain maps to 24-293 (LWIKCPDTGQ…PAVEEPAVVD (270 aa)).

Belongs to the AccD/PCCB family. As to quaternary structure, acetyl-CoA carboxylase is a heterohexamer composed of biotin carboxyl carrier protein (AccB), biotin carboxylase (AccC) and two subunits each of ACCase subunit alpha (AccA) and ACCase subunit beta (AccD).

It localises to the cytoplasm. The catalysed reaction is N(6)-carboxybiotinyl-L-lysyl-[protein] + acetyl-CoA = N(6)-biotinyl-L-lysyl-[protein] + malonyl-CoA. It participates in lipid metabolism; malonyl-CoA biosynthesis; malonyl-CoA from acetyl-CoA: step 1/1. Its function is as follows. Component of the acetyl coenzyme A carboxylase (ACC) complex. Biotin carboxylase (BC) catalyzes the carboxylation of biotin on its carrier protein (BCCP) and then the CO(2) group is transferred by the transcarboxylase to acetyl-CoA to form malonyl-CoA. The protein is Acetyl-coenzyme A carboxylase carboxyl transferase subunit beta of Rhodopseudomonas palustris (strain HaA2).